The sequence spans 131 residues: Large ribosomal subunit protein bL12 (131 aa).

Positions 100 to 125 are enriched in basic and acidic residues; the sequence is STPKPIKEGISKEDAEAAKKQLEDAG. The disordered stretch occupies residues 100-131; the sequence is STPKPIKEGISKEDAEAAKKQLEDAGGKVSIK.

It belongs to the bacterial ribosomal protein bL12 family. As to quaternary structure, homodimer. Part of the ribosomal stalk of the 50S ribosomal subunit. Forms a multimeric L10(L12)X complex, where L10 forms an elongated spine to which 2 to 4 L12 dimers bind in a sequential fashion. Binds GTP-bound translation factors.

Functionally, forms part of the ribosomal stalk which helps the ribosome interact with GTP-bound translation factors. Is thus essential for accurate translation. The polypeptide is Large ribosomal subunit protein bL12 (Cyanothece sp. (strain PCC 7425 / ATCC 29141)).